We begin with the raw amino-acid sequence, 284 residues long: Polyamine aminopropyltransferase (284 aa).

The PABS domain maps to 4-238 (EVWNTERLHD…GPMALGWGSH (235 aa)). Gln-33 serves as a coordination point for S-methyl-5'-thioadenosine. 2 residues coordinate spermidine: His-64 and Asp-88. S-methyl-5'-thioadenosine-binding positions include Glu-108 and 140–141 (DG). The active-site Proton acceptor is the Asp-158. A spermidine-binding site is contributed by 158–161 (DSTD). S-methyl-5'-thioadenosine is bound at residue Pro-165.

It belongs to the spermidine/spermine synthase family. Homodimer or homotetramer.

It is found in the cytoplasm. It carries out the reaction S-adenosyl 3-(methylsulfanyl)propylamine + putrescine = S-methyl-5'-thioadenosine + spermidine + H(+). It functions in the pathway amine and polyamine biosynthesis; spermidine biosynthesis; spermidine from putrescine: step 1/1. Its function is as follows. Catalyzes the irreversible transfer of a propylamine group from the amino donor S-adenosylmethioninamine (decarboxy-AdoMet) to putrescine (1,4-diaminobutane) to yield spermidine. The chain is Polyamine aminopropyltransferase from Ruegeria sp. (strain TM1040) (Silicibacter sp.).